Consider the following 596-residue polypeptide: Pentatricopeptide repeat-containing protein At1g50270 (596 aa).

PPR repeat units lie at residues 66 to 102 (SIQLWDSLIGHFSGGITLNRRLSFLAYRHMRRNGVIP), 103 to 136 (SRHTFPPLLKAVFKLRDSNPFQFHAHIVKFGLDS), 137 to 167 (DPFVRNSLISGYSSSGLFDFASRLFDGAEDK), 168 to 202 (DVVTWTAMIDGFVRNGSASEAMVYFVEMKKTGVAA), 203 to 237 (NEMTVVSVLKAAGKVEDVRFGRSVHGLYLETGRVK), 239 to 269 (DVFIGSSLVDMYGKCSCYDDAQKVFDEMPSR), 270 to 304 (NVVTWTALIAGYVQSRCFDKGMLVFEEMLKSDVAP), 305 to 339 (NEKTLSSVLSACAHVGALHRGRRVHCYMIKNSIEI), 340 to 370 (NTTAGTTLIDLYVKCGCLEEAILVFERLHEK), 371 to 405 (NVYTWTAMINGFAAHGYARDAFDLFYTMLSSHVSP), 406 to 436 (NEVTFMAVLSACAHGGLVEEGRRLFLSMKGR), and 442 to 472 (KADHYACMVDLFGRKGLLEEAKALIERMPME). Positions 477 to 552 (VWGALFGSCL…SPGFSWIEVK (76 aa)) are type E motif. A type E(+) motif region spans residues 553 to 584 (GKLCEFIAFDDKKPLESDDLYKTLDTVGVQMR).

Belongs to the PPR family. PCMP-E subfamily.

This is Pentatricopeptide repeat-containing protein At1g50270 (PCMP-E42) from Arabidopsis thaliana (Mouse-ear cress).